Reading from the N-terminus, the 209-residue chain is Cytidylate kinase (209 aa).

9–17 (GPAAAGKGT) lines the ATP pocket.

This sequence belongs to the cytidylate kinase family. Type 1 subfamily.

The protein localises to the cytoplasm. The catalysed reaction is CMP + ATP = CDP + ADP. It catalyses the reaction dCMP + ATP = dCDP + ADP. The protein is Cytidylate kinase of Granulibacter bethesdensis (strain ATCC BAA-1260 / CGDNIH1).